Consider the following 394-residue polypeptide: Suppressor APC domain-containing protein 2 (394 aa).

Disordered regions lie at residues 1–23 (MAGA…STEG), 95–125 (LLSA…RLVF), and 150–188 (GPSA…SSSA). A compositionally biased stretch (polar residues) spans 177–188 (SQSAALEPSSSA). Phosphothreonine is present on Thr219. The stretch at 227 to 277 (GLLKQMKELEQEKEVLLQGLEMMARGRDWYQQQLQRVQERQRRLGQSRASA) forms a coiled coil. A Phosphoserine modification is found at Ser284. A coiled-coil region spans residues 336–384 (QQQTILMLKEQNRLLTQEVTEKSERITQLEQEKSALIKQLFEARALSQQ).

Interacts with a spindle orientation complex at least composed of GNAI1, GPSM2 and NUMA1. Interacts with GPSM2 (via TPR motifs); this interaction is required to prevent GPSM2 anchoring at the mitotic apical cortex and is inhibited in presence of NUMA1 in a dose dependent manner. Interacts with PARD3. As to expression, expressed in 5-month-old fetal tissues, including stomach, intestine, colon, liver, brain, lung, heart, spleen and kidney. Undetectable in non-cancerous adult tissues. Expressed in many primary gastric carcinoma, but almost not in adjacent normal mucosa. Expressed preferentially in M and G1 phases, compared to S and G2 phases. Expression is up-regulated in hepatocellular carcinoma (HCC) and colorectal cancer (CRC) tissues (at protein level).

The protein resides in the cytoplasm. The protein localises to the nucleus. Its subcellular location is the cell cortex. It is found in the apical cell membrane. It localises to the cell junction. The protein resides in the tight junction. Functionally, plays a role in planar mitotic spindle orientation in retinal progenitor cells (RPCs) and promotes the production of symmetric terminal divisions. Negatively regulates the mitotic apical cortex localization of GPSM2. Involved also in positive regulation of cell proliferation and tumor cell growth. This Homo sapiens (Human) protein is Suppressor APC domain-containing protein 2.